A 562-amino-acid chain; its full sequence is NAD-dependent malic enzyme 1 (562 aa).

The Proton donor role is filled by Tyr101. Arg154 serves as a coordination point for NAD(+). Lys172 (proton acceptor) is an active-site residue. 3 residues coordinate a divalent metal cation: Glu243, Asp244, and Asp267. NAD(+)-binding residues include Asp267 and Asn415.

Belongs to the malic enzymes family. In terms of assembly, homotetramer. Mg(2+) is required as a cofactor. Requires Mn(2+) as cofactor.

It catalyses the reaction (S)-malate + NAD(+) = pyruvate + CO2 + NADH. It carries out the reaction oxaloacetate + H(+) = pyruvate + CO2. The polypeptide is NAD-dependent malic enzyme 1 (Vibrio vulnificus (strain YJ016)).